Consider the following 496-residue polypeptide: Flotillin-like protein 3 (496 aa).

Cys37 carries S-palmitoyl cysteine lipidation. Residues 301-328 (VVREAELQLEVERKNALRLTEKLKAEKL) adopt a coiled-coil conformation.

This sequence belongs to the band 7/mec-2 family. Flotillin subfamily. May be palmitoylated.

It is found in the cell membrane. Its subcellular location is the membrane. The protein resides in the caveola. Functionally, may act as a scaffolding protein within caveolar membranes, functionally participating in formation of caveolae or caveolae-like vesicles. This is Flotillin-like protein 3 (FLOT3) from Oryza sativa subsp. japonica (Rice).